The sequence spans 321 residues: D-alanine--D-alanine ligase (321 aa).

The ATP-grasp domain maps to 121–315 (RSCFLKNNIN…FTNLIEEIIK (195 aa)). 148–199 (MKRPYVIKPLKQGSSIGVEVIFEEDDFHFIDYDFPYGEDIIIEQYIQGQELQ) is a binding site for ATP. Residues E268, E282, and N284 each contribute to the Mg(2+) site.

This sequence belongs to the D-alanine--D-alanine ligase family. It depends on Mg(2+) as a cofactor. Mn(2+) serves as cofactor.

It localises to the cytoplasm. The catalysed reaction is 2 D-alanine + ATP = D-alanyl-D-alanine + ADP + phosphate + H(+). The protein operates within cell wall biogenesis; peptidoglycan biosynthesis. In terms of biological role, cell wall formation. The chain is D-alanine--D-alanine ligase from Rickettsia typhi (strain ATCC VR-144 / Wilmington).